Reading from the N-terminus, the 156-residue chain is Small ribosomal subunit protein uS7 (156 aa).

Belongs to the universal ribosomal protein uS7 family. In terms of assembly, part of the 30S ribosomal subunit. Contacts proteins S9 and S11.

In terms of biological role, one of the primary rRNA binding proteins, it binds directly to 16S rRNA where it nucleates assembly of the head domain of the 30S subunit. Is located at the subunit interface close to the decoding center, probably blocks exit of the E-site tRNA. This chain is Small ribosomal subunit protein uS7, found in Synechococcus sp. (strain RCC307).